Here is a 390-residue protein sequence, read N- to C-terminus: Tryptophan synthase beta chain (390 aa).

At Lys90 the chain carries N6-(pyridoxal phosphate)lysine.

It belongs to the TrpB family. In terms of assembly, tetramer of two alpha and two beta chains. Pyridoxal 5'-phosphate is required as a cofactor.

The catalysed reaction is (1S,2R)-1-C-(indol-3-yl)glycerol 3-phosphate + L-serine = D-glyceraldehyde 3-phosphate + L-tryptophan + H2O. It functions in the pathway amino-acid biosynthesis; L-tryptophan biosynthesis; L-tryptophan from chorismate: step 5/5. In terms of biological role, the beta subunit is responsible for the synthesis of L-tryptophan from indole and L-serine. The polypeptide is Tryptophan synthase beta chain (Bacteroides fragilis (strain ATCC 25285 / DSM 2151 / CCUG 4856 / JCM 11019 / LMG 10263 / NCTC 9343 / Onslow / VPI 2553 / EN-2)).